Reading from the N-terminus, the 548-residue chain is MEMEKEENVVYGPLPFYPIEEGSAGIQLHKYMHQYAKLGAIAFSNALTGVDISYQEYFDITCRLAEAMKNFGMKPEEHIALCSENCEEFFIPVLAGLYIGVAVAPTNEIYTLRELNHSLGIAQPTIVFSSRKGLPKVLEVQKTVTCIKKIVILDSKVNFGGHDCMETFIKKHVELGFQPSSFVPIDVKNRKQHVALLMNSSGSTGLPKGVRITHEGAVTRFSHAKDPIYGNQVSPGTAILTVVPFHHGFGMFTTLGYFACGYRVVMLTKFDEELFLRTLQDYKCTSVILVPTLFAILNKSELIDKFDLSNLTEIASGGAPLAKEVGEAVARRFNLPGVRQGYGLTETTSAFIITPEGDDKPGASGKVVPLFKVKVIDLDTKKTLGVNRRGEICVKGPSLMLGYSNNPEATRETIDEEGWLHTGDIGYYDEDEHFFIVDRLKSLIKYKGYQVPPAELESVLLQHPNIFDAGVAGVPDPDAGELPGAVVVMEKGKTMTEKEIVDYVNSQVVNHKRLRGGVRFVDEVPKGLTGKIDAKVIREILKKPQAKM.

The Microbody targeting signal motif lies at 546–548; sequence AKM.

It belongs to the ATP-dependent AMP-binding enzyme family. As to quaternary structure, homodimer. Mg(2+) serves as cofactor.

It localises to the peroxisome. It carries out the reaction firefly D-luciferin + ATP + O2 = firefly oxyluciferin + hnu + AMP + CO2 + diphosphate. Inhibited by ATP analogs and sodium deoxycholate. Activated by choline-containing phospholipids. Its function is as follows. Produces green light with a wavelength of 570 nm. This is Luciferin 4-monooxygenase from Luciola mingrelica (Southern Russian firefly).